We begin with the raw amino-acid sequence, 343 residues long: Probable F-box protein At1g67455 (343 aa).

The F-box domain maps to 1 to 46 (MMISDLPEDMVEEILSRVSIISLGALRWNDLSKARVICKAEARQQF).

The sequence is that of Probable F-box protein At1g67455 from Arabidopsis thaliana (Mouse-ear cress).